We begin with the raw amino-acid sequence, 96 residues long: Aspartyl/glutamyl-tRNA(Asn/Gln) amidotransferase subunit C (96 aa).

Belongs to the GatC family. As to quaternary structure, heterotrimer of A, B and C subunits.

The catalysed reaction is L-glutamyl-tRNA(Gln) + L-glutamine + ATP + H2O = L-glutaminyl-tRNA(Gln) + L-glutamate + ADP + phosphate + H(+). It carries out the reaction L-aspartyl-tRNA(Asn) + L-glutamine + ATP + H2O = L-asparaginyl-tRNA(Asn) + L-glutamate + ADP + phosphate + 2 H(+). Its function is as follows. Allows the formation of correctly charged Asn-tRNA(Asn) or Gln-tRNA(Gln) through the transamidation of misacylated Asp-tRNA(Asn) or Glu-tRNA(Gln) in organisms which lack either or both of asparaginyl-tRNA or glutaminyl-tRNA synthetases. The reaction takes place in the presence of glutamine and ATP through an activated phospho-Asp-tRNA(Asn) or phospho-Glu-tRNA(Gln). The polypeptide is Aspartyl/glutamyl-tRNA(Asn/Gln) amidotransferase subunit C (Sulfurimonas denitrificans (strain ATCC 33889 / DSM 1251) (Thiomicrospira denitrificans (strain ATCC 33889 / DSM 1251))).